A 490-amino-acid chain; its full sequence is MEKSHRVCKNCVANHYWLHMDNHGKSFIKVMITDFKNGVTIPAKFARNFGGQMSGTVKLETRNGKTYEVQVAKELNNLVLRSGWERFASAYELEKGDILVFIYSGNSHFKVWIYDPSACEKGLPCIITEQLPRVQQRSISHNNHTQLKRNAKSAKLYVDSSGHSKETSEINPANSPSWKPTERVPSSEELDEPVDLANVQKATKSFYSLPRMCNMTSAQKAEVDALEKRIKPQIPFYITVMDKASATDGLLAISKDYAVSYLLDKNETIKLCHSGRSMTWDISLDIDTDDQYALSTGWLDFIRNNHLQEGDICVFEASKNKRGVALIFHPLKQSHHPKPPGCVPSTKFPRHGVSKPNYIVSRFTTLSGQLKIKVEAKVQAIQSEIPIFVAVMRESFIRGRSRYMCFSAKYAAKYLPREKNKIMRLRLPNKSYKYKAVFKINNKVHKLGGGWGKFVDDNKIKLGDICLFQLMKNKKKLMMMVHIIRKSEFC.

The TF-B3 1 DNA-binding region spans 24–117; the sequence is GKSFIKVMIT…HFKVWIYDPS (94 aa). A disordered region spans residues 161 to 191; it reads SGHSKETSEINPANSPSWKPTERVPSSEELD. Over residues 169-178 the composition is skewed to polar residues; that stretch reads EINPANSPSW. DNA-binding regions (TF-B3) lie at residues 236 to 331 and 389 to 487; these read FYIT…FHPL and VAVM…IRKS.

The protein localises to the nucleus. In Oryza sativa subsp. japonica (Rice), this protein is B3 domain-containing protein LOC_Os12g40080.